A 360-amino-acid polypeptide reads, in one-letter code: MDPEETSVYLDYYYATSPNPDIRETHSHVPYTSVFLPVFYTAVFLTGVLGNLVLMGALHFKPGSRRLIDIFIINLAASDFIFLVTLPLWVDKEASLGLWRTGSFLCKGSSYMISVNMHCSVFLLTCMSVDRYLAIVCPVVSRKFRRTDCAYVVCASIWFISCLLGLPTLLSRELTLIDDKPYCAEKKATPLKLIWSLVALIFTFFVPLLSIVTCYCCIARKLCAHYQQSGKHNKKLKKSIKIIFIVVAAFLVSWLPFNTSKLLAIVSGLQQERYFPSAILQLGMEVSGPLAFANSCVNPFIYYIFDSYIRRAIVHCLCPCLKNYDFGSSTETSDSHLTKALSTFIHAEDFTRRRKRSVSL.

Residues 1-33 lie on the Extracellular side of the membrane; sequence MDPEETSVYLDYYYATSPNPDIRETHSHVPYTS. Residues 34 to 54 traverse the membrane as a helical segment; the sequence is VFLPVFYTAVFLTGVLGNLVL. Residues 55–69 are Cytoplasmic-facing; it reads MGALHFKPGSRRLID. The chain crosses the membrane as a helical span at residues 70-90; the sequence is IFIINLAASDFIFLVTLPLWV. At 91–120 the chain is on the extracellular side; the sequence is DKEASLGLWRTGSFLCKGSSYMISVNMHCS. A helical membrane pass occupies residues 121 to 141; it reads VFLLTCMSVDRYLAIVCPVVS. The Cytoplasmic segment spans residues 142–149; sequence RKFRRTDC. Residues 150-170 form a helical membrane-spanning segment; sequence AYVVCASIWFISCLLGLPTLL. At 171–192 the chain is on the extracellular side; it reads SRELTLIDDKPYCAEKKATPLK. Residues 193-213 traverse the membrane as a helical segment; that stretch reads LIWSLVALIFTFFVPLLSIVT. Over 214–239 the chain is Cytoplasmic; the sequence is CYCCIARKLCAHYQQSGKHNKKLKKS. Residues 240–260 form a helical membrane-spanning segment; sequence IKIIFIVVAAFLVSWLPFNTS. Residues 261–284 are Extracellular-facing; the sequence is KLLAIVSGLQQERYFPSAILQLGM. A helical membrane pass occupies residues 285-305; sequence EVSGPLAFANSCVNPFIYYIF. Over 306 to 360 the chain is Cytoplasmic; the sequence is DSYIRRAIVHCLCPCLKNYDFGSSTETSDSHLTKALSTFIHAEDFTRRRKRSVSL. The residue at position 359 (Ser359) is a Phosphoserine.

The protein belongs to the G-protein coupled receptor 1 family. As to quaternary structure, interacts with adapter YWHAE; this interaction promotes ER-to-Golgi transport of GPR15. Post-translationally, phosphorylation is necessary for YWHAE binding and efficient surface expression. O-glycosylated. Sialylated O-glycans in the N-terminal tail inhibits binding of GPR15LG. In terms of processing, sulfation is required for efficient binding of GPR15LG.

It localises to the cell membrane. Its function is as follows. G protein-coupled receptor that plays an important role in immune homeostasis. Acts via its natural ligand GPR15LG, a chemokine-like polypeptide strongly expressed in gastrointestinal tissues. GPR15-GPR15LG signaling axis regulates intestinal homeostasis and inflammation through the migration of immune cells. Controls thereby the specific homing of T-cells, particularly FOXP3+ regulatory T-cells (Tregs), to the large intestine lamina propria. Also required for skin localization of thymus-derived dendritic epidermal T-cells. Plays an important role in mediating cytoprotective function as well as angiogenesis of thrombomodulin. Mechanistically, preferentially signals through the Gi/o pathway to inhibit adenylate cyclase activity and activate a phosphatidylinositol-calcium second messenger system that regulates the release of Ca(2+) ions from intracellular stores. This is G-protein coupled receptor 15 (GPR15) from Macaca nemestrina (Pig-tailed macaque).